The primary structure comprises 650 residues: Glycoprotein 105 (650 aa).

A helical; Signal-anchor for type II membrane protein membrane pass occupies residues 1 to 32 (MATARLGVMRPPRSCALIFLCAFSMATAPTNA). At 33–650 (TAHRRAGTVK…RFPHVGIGSY (618 aa)) the chain is on the virion surface side. Asn-52, Asn-290, Asn-332, Asn-338, Asn-359, Asn-422, Asn-516, and Asn-552 each carry an N-linked (GlcNAc...) asparagine; by host glycan.

In terms of assembly, associates with the gp82-gp105 complex. In terms of processing, N-Glycosylated.

The protein localises to the virion membrane. This is Glycoprotein 105 (U96/U97/U98/U99/U100) from Homo sapiens (Human).